Reading from the N-terminus, the 435-residue chain is Bifunctional protein GlmU (435 aa).

The interval 1 to 224 (MNDTSIIILA…EQNFMGINDK (224 aa)) is pyrophosphorylase. UDP-N-acetyl-alpha-D-glucosamine is bound by residues 9-12 (LAAG), Lys-23, Gln-75, and 82-83 (GT). Mg(2+) is bound at residue Asp-103. 4 residues coordinate UDP-N-acetyl-alpha-D-glucosamine: Gly-136, Glu-150, Asn-165, and Asn-222. Residue Asn-222 coordinates Mg(2+). Residues 225–245 (FQLSVAEKIMQDEIKQDLMKA) are linker. The segment at 246–435 (GVLMRLPESI…KFFGKNNAEK (190 aa)) is N-acetyltransferase. UDP-N-acetyl-alpha-D-glucosamine contacts are provided by Arg-309 and Lys-326. The active-site Proton acceptor is His-337. UDP-N-acetyl-alpha-D-glucosamine-binding residues include Tyr-340 and Asn-351. Residues 360-361 (NY), Ser-379, Ala-397, and Arg-414 contribute to the acetyl-CoA site.

This sequence in the N-terminal section; belongs to the N-acetylglucosamine-1-phosphate uridyltransferase family. In the C-terminal section; belongs to the transferase hexapeptide repeat family. As to quaternary structure, homotrimer. It depends on Mg(2+) as a cofactor.

It localises to the cytoplasm. It carries out the reaction alpha-D-glucosamine 1-phosphate + acetyl-CoA = N-acetyl-alpha-D-glucosamine 1-phosphate + CoA + H(+). The enzyme catalyses N-acetyl-alpha-D-glucosamine 1-phosphate + UTP + H(+) = UDP-N-acetyl-alpha-D-glucosamine + diphosphate. It participates in nucleotide-sugar biosynthesis; UDP-N-acetyl-alpha-D-glucosamine biosynthesis; N-acetyl-alpha-D-glucosamine 1-phosphate from alpha-D-glucosamine 6-phosphate (route II): step 2/2. Its pathway is nucleotide-sugar biosynthesis; UDP-N-acetyl-alpha-D-glucosamine biosynthesis; UDP-N-acetyl-alpha-D-glucosamine from N-acetyl-alpha-D-glucosamine 1-phosphate: step 1/1. The protein operates within bacterial outer membrane biogenesis; LPS lipid A biosynthesis. Catalyzes the last two sequential reactions in the de novo biosynthetic pathway for UDP-N-acetylglucosamine (UDP-GlcNAc). The C-terminal domain catalyzes the transfer of acetyl group from acetyl coenzyme A to glucosamine-1-phosphate (GlcN-1-P) to produce N-acetylglucosamine-1-phosphate (GlcNAc-1-P), which is converted into UDP-GlcNAc by the transfer of uridine 5-monophosphate (from uridine 5-triphosphate), a reaction catalyzed by the N-terminal domain. The protein is Bifunctional protein GlmU of Campylobacter curvus (strain 525.92).